The primary structure comprises 133 residues: MTLNLCVLTPNRIVWDSKVKEIILSTNSGQIGILPNHAPIATAVDIGILRIRLNDQWLTMALMGGFARIGNNEITVLVNDAEKGSDIEPQEAQQTLEIAEANLRKAEGKRQIIEANLALRRARTRVEAINVTS.

The protein belongs to the ATPase epsilon chain family. As to quaternary structure, F-type ATPases have 2 components, CF(1) - the catalytic core - and CF(0) - the membrane proton channel. CF(1) has five subunits: alpha(3), beta(3), gamma(1), delta(1), epsilon(1). CF(0) has three main subunits: a, b and c.

Its subcellular location is the plastid. It localises to the chloroplast thylakoid membrane. Its function is as follows. Produces ATP from ADP in the presence of a proton gradient across the membrane. This is ATP synthase epsilon chain, chloroplastic from Vitis vinifera (Grape).